A 135-amino-acid chain; its full sequence is Protein NrdI (135 aa).

It belongs to the NrdI family.

Its function is as follows. Probably involved in ribonucleotide reductase function. The protein is Protein NrdI of Pectobacterium carotovorum subsp. carotovorum (strain PC1).